A 407-amino-acid polypeptide reads, in one-letter code: Methylthioribose kinase (407 aa).

ATP contacts are provided by residues asparagine 40, lysine 57, and 111-113 (EDL). Residue aspartate 229 coordinates substrate. 246-248 (DAE) is a binding site for ATP. Residue arginine 344 participates in substrate binding.

This sequence belongs to the methylthioribose kinase family. Homodimer.

It carries out the reaction 5-(methylsulfanyl)-D-ribose + ATP = 5-(methylsulfanyl)-alpha-D-ribose 1-phosphate + ADP + H(+). It functions in the pathway amino-acid biosynthesis; L-methionine biosynthesis via salvage pathway; S-methyl-5-thio-alpha-D-ribose 1-phosphate from S-methyl-5'-thioadenosine (hydrolase route): step 2/2. Catalyzes the phosphorylation of methylthioribose into methylthioribose-1-phosphate. This Yersinia pseudotuberculosis serotype O:1b (strain IP 31758) protein is Methylthioribose kinase.